Consider the following 117-residue polypeptide: Large ribosomal subunit protein uL18 (117 aa).

It belongs to the universal ribosomal protein uL18 family. In terms of assembly, part of the 50S ribosomal subunit; part of the 5S rRNA/L5/L18/L25 subcomplex. Contacts the 5S and 23S rRNAs.

In terms of biological role, this is one of the proteins that bind and probably mediate the attachment of the 5S RNA into the large ribosomal subunit, where it forms part of the central protuberance. This is Large ribosomal subunit protein uL18 from Haemophilus influenzae (strain 86-028NP).